We begin with the raw amino-acid sequence, 326 residues long: Isoaspartyl peptidase/L-asparaginase (326 aa).

The Nucleophile role is filled by Thr185. Substrate-binding positions include 213–216 (RVGD) and 236–239 (TGHG).

The protein belongs to the Ntn-hydrolase family. Heterodimer of an alpha and beta chain produced by autocleavage. This heterodimer may then dimerize in turn, giving rise to a heterotetramer. Cleaved into an alpha and beta chain by autocatalysis; this activates the enzyme. The N-terminal residue of the beta subunit is responsible for the nucleophile hydrolase activity. As to expression, high expression in the heart and brain while low to minimal expression in the other tissues. In ocular tissues, high levels is observed in the optic nerve and retina while relatively low levels of expression are detected in the iris-ciliary body, lens or retinal pigment epithelium.

The protein resides in the cytoplasm. The catalysed reaction is L-asparagine + H2O = L-aspartate + NH4(+). It catalyses the reaction Cleavage of a beta-linked Asp residue from the N-terminus of a polypeptide.. In terms of biological role, has both L-asparaginase and beta-aspartyl peptidase activity. May be involved in the production of L-aspartate, which can act as an excitatory neurotransmitter in some brain regions. Is highly active with L-Asp beta-methyl ester. Besides, has catalytic activity toward beta-aspartyl dipeptides and their methyl esters, including beta-L-Asp-L-Phe, beta-L-Asp-L-Phe methyl ester (aspartame), beta-L-Asp-L-Ala, beta-L-Asp-L-Leu and beta-L-Asp-L-Lys. Does not have aspartylglucosaminidase activity and is inactive toward GlcNAc-L-Asn. Likewise, has no activity toward glutamine. The polypeptide is Isoaspartyl peptidase/L-asparaginase (Asrgl1) (Mus musculus (Mouse)).